Here is a 334-residue protein sequence, read N- to C-terminus: Transcription factor TGA2.1 (334 aa).

Residues 1 to 13 (MADASSRTDTSIV) show a composition bias toward polar residues. Positions 1–49 (MADASSRTDTSIVVDNDDKNHQLENGHSGAVMASNSSDRSDRSDKLMDQ) are disordered. Positions 38 to 49 (DRSDRSDKLMDQ) are enriched in basic and acidic residues. Residues 48–92 (DQKTIRRLAQNREAARKSRLRKKAYVQQLESSKLKLAQLEQELQK) form the bZIP domain. The segment at 50–70 (KTIRRLAQNREAARKSRLRKK) is basic motif. Positions 76-90 (LESSKLKLAQLEQEL) are leucine-zipper. Positions 115 to 331 (ALTFDLEYTR…RALSSLWLAR (217 aa)) constitute a DOG1 domain.

It belongs to the bZIP family. Interacts with NPR1/NH1 and NPR3/NH3.

The protein localises to the nucleus. Functionally, plays a negative role in rice basal defense responses to the bacterial blight pathogen Xanthomomas oryzae pv. oryzae (Xoo). May function in both positive and negative regulation of rice defense genes. Binds DNA in vitro. Acts as a transcriptional activator when bound to NPR1/NH1 in vitro. Binds to the promoter sequence of CRK10 in vitro. This Oryza sativa subsp. japonica (Rice) protein is Transcription factor TGA2.1.